Here is a 414-residue protein sequence, read N- to C-terminus: uncharacterized protein (414 aa).

The protein belongs to the UbiH/COQ6 family. The cofactor is FAD.

This is an uncharacterized protein from Synechocystis sp. (strain ATCC 27184 / PCC 6803 / Kazusa).